The chain runs to 100 residues: MELTPREKDKLLLYTAALVAERRKARGLKLNYPEAMAYLSMEIVEGARDGRSVAELMAYGRTLLSRDDVMEGIPEMIPEVQVEATFPDGTKLVTVHNPIP.

The protein belongs to the urease gamma subunit family. In terms of assembly, heterotrimer of UreA (gamma), UreB (beta) and UreC (alpha) subunits. Three heterotrimers associate to form the active enzyme.

Its subcellular location is the cytoplasm. The catalysed reaction is urea + 2 H2O + H(+) = hydrogencarbonate + 2 NH4(+). It functions in the pathway nitrogen metabolism; urea degradation; CO(2) and NH(3) from urea (urease route): step 1/1. The protein is Urease subunit gamma of Hahella chejuensis (strain KCTC 2396).